The following is a 1050-amino-acid chain: Beta-galactosidase (1050 aa).

Residues asparagine 100 and aspartate 199 each coordinate substrate. Aspartate 199 serves as a coordination point for Na(+). Positions 422, 424, and 467 each coordinate Mg(2+). Residues glutamate 467 and 543-546 (EYAH) contribute to the substrate site. The Proton donor role is filled by glutamate 467. Glutamate 543 functions as the Nucleophile in the catalytic mechanism. Residue asparagine 603 coordinates Mg(2+). Na(+)-binding residues include phenylalanine 607 and asparagine 610. Residues asparagine 610 and tryptophan 1025 each coordinate substrate.

It belongs to the glycosyl hydrolase 2 family. Homotetramer. It depends on Mg(2+) as a cofactor. The cofactor is Na(+).

The enzyme catalyses Hydrolysis of terminal non-reducing beta-D-galactose residues in beta-D-galactosides.. The chain is Beta-galactosidase from Yersinia pestis bv. Antiqua (strain Angola).